The sequence spans 433 residues: Xylose isomerase (433 aa).

Active-site residues include histidine 99 and aspartate 102. Mg(2+) contacts are provided by glutamate 230, glutamate 266, histidine 269, aspartate 294, aspartate 305, aspartate 307, and aspartate 337.

The protein belongs to the xylose isomerase family. As to quaternary structure, homotetramer. Requires Mg(2+) as cofactor.

The protein localises to the cytoplasm. It carries out the reaction alpha-D-xylose = alpha-D-xylulofuranose. The sequence is that of Xylose isomerase from Cereibacter sphaeroides (strain ATCC 17025 / ATH 2.4.3) (Rhodobacter sphaeroides).